A 196-amino-acid polypeptide reads, in one-letter code: Guanylate kinase (196 aa).

Residues 8-191 (GRLIVLTGPT…AAADLWSVIA (184 aa)) enclose the Guanylate kinase-like domain. An ATP-binding site is contributed by 15 to 22 (GPTAVGKG).

Belongs to the guanylate kinase family.

It localises to the cytoplasm. It carries out the reaction GMP + ATP = GDP + ADP. Functionally, essential for recycling GMP and indirectly, cGMP. The polypeptide is Guanylate kinase (Bifidobacterium longum (strain NCC 2705)).